Reading from the N-terminus, the 93-residue chain is Large ribosomal subunit protein eL31 (93 aa).

It belongs to the eukaryotic ribosomal protein eL31 family.

The protein is Large ribosomal subunit protein eL31 of Methanosarcina mazei (strain ATCC BAA-159 / DSM 3647 / Goe1 / Go1 / JCM 11833 / OCM 88) (Methanosarcina frisia).